Reading from the N-terminus, the 117-residue chain is Large ribosomal subunit protein bL20 (117 aa).

It belongs to the bacterial ribosomal protein bL20 family.

In terms of biological role, binds directly to 23S ribosomal RNA and is necessary for the in vitro assembly process of the 50S ribosomal subunit. It is not involved in the protein synthesizing functions of that subunit. The polypeptide is Large ribosomal subunit protein bL20 (Geobacter metallireducens (strain ATCC 53774 / DSM 7210 / GS-15)).